A 359-amino-acid chain; its full sequence is Outer membrane protein A (359 aa).

Residues 1–21 (MKKTAIALAVALAGFATVAQA) form the signal peptide. 8 consecutive transmembrane segments (beta stranded) span residues 27–37 (TWYTGAKLGWS), 62–73 (QLGAGAFLGYQA), 77–85 (LGFELGYDW), 103–114 (QGVQLAAKLSYP), 119–127 (LDIYTRLGG), 154–163 (PLAAVGVEYA), 168–175 (WATRLDYQ), and 194–202 (MLSLGVSYR). 5 consecutive repeat copies span residues 210 to 211 (AP), 212 to 213 (AP), 214 to 215 (AP), 216 to 217 (AP), and 218 to 219 (AP). Residues 210 to 219 (APAPAPAPAP) are 5 X 2 AA tandem repeats of A-P. The OmpA-like domain occupies 221-351 (VETKRFTLKS…RVEIEVKGIK (131 aa)). Cys322 and Cys336 form a disulfide bridge.

Belongs to the outer membrane OOP (TC 1.B.6) superfamily. OmpA family. In terms of assembly, monomer and homodimer.

The protein localises to the cell outer membrane. Its function is as follows. With TolR probably plays a role in maintaining the position of the peptidoglycan cell wall in the periplasm. Acts as a porin with low permeability that allows slow penetration of small solutes; an internal gate slows down solute passage. In Serratia marcescens, this protein is Outer membrane protein A.